The sequence spans 149 residues: MHCPFCFAVDTKVIDSRLVGEGSSVRRRRQCLVCNERFTTFEVAELVMPRVVKSNDVREPFNEDKLRSGMQKALEKRPVSSDDVEMAINHIKSHLRATGEREVPSKLIGNLVMEQLKKLDKVAYIRFASVYRSFEDIREFGEEIARLQD.

A zinc finger lies at 3–34 (CPFCFAVDTKVIDSRLVGEGSSVRRRRQCLVC). Positions 49-139 (PRVVKSNDVR…VYRSFEDIRE (91 aa)) constitute an ATP-cone domain.

Belongs to the NrdR family. Zn(2+) is required as a cofactor.

Negatively regulates transcription of bacterial ribonucleotide reductase nrd genes and operons by binding to NrdR-boxes. This chain is Transcriptional repressor NrdR, found in Cronobacter sakazakii (strain ATCC BAA-894) (Enterobacter sakazakii).